A 185-amino-acid chain; its full sequence is Ribosome-recycling factor (185 aa).

This sequence belongs to the RRF family.

The protein resides in the cytoplasm. Functionally, responsible for the release of ribosomes from messenger RNA at the termination of protein biosynthesis. May increase the efficiency of translation by recycling ribosomes from one round of translation to another. In Bacillus anthracis (strain A0248), this protein is Ribosome-recycling factor.